Consider the following 391-residue polypeptide: S-adenosylmethionine synthase (391 aa).

His14 is a binding site for ATP. Mg(2+) is bound at residue Asp16. Residue Glu42 participates in K(+) binding. The L-methionine site is built by Glu55 and Gln98. Residues 98-108 (QSADIAMGVDE) are flexible loop. ATP contacts are provided by residues 172–174 (DGK), 238–239 (RF), Asp247, 253–254 (RK), Ala270, and Lys274. Position 247 (Asp247) interacts with L-methionine. Lys278 is a binding site for L-methionine.

This sequence belongs to the AdoMet synthase family. As to quaternary structure, homotetramer; dimer of dimers. Mg(2+) is required as a cofactor. It depends on K(+) as a cofactor.

It is found in the cytoplasm. It catalyses the reaction L-methionine + ATP + H2O = S-adenosyl-L-methionine + phosphate + diphosphate. The protein operates within amino-acid biosynthesis; S-adenosyl-L-methionine biosynthesis; S-adenosyl-L-methionine from L-methionine: step 1/1. Catalyzes the formation of S-adenosylmethionine (AdoMet) from methionine and ATP. The overall synthetic reaction is composed of two sequential steps, AdoMet formation and the subsequent tripolyphosphate hydrolysis which occurs prior to release of AdoMet from the enzyme. The polypeptide is S-adenosylmethionine synthase (Clostridium botulinum (strain Alaska E43 / Type E3)).